Consider the following 308-residue polypeptide: Homoserine O-succinyltransferase (308 aa).

C142 serves as the catalytic Acyl-thioester intermediate. Substrate contacts are provided by K163 and S192. Residue H235 is the Proton acceptor of the active site. The active site involves E237. Position 249 (R249) interacts with substrate.

The protein belongs to the MetA family.

The protein localises to the cytoplasm. It catalyses the reaction L-homoserine + succinyl-CoA = O-succinyl-L-homoserine + CoA. The protein operates within amino-acid biosynthesis; L-methionine biosynthesis via de novo pathway; O-succinyl-L-homoserine from L-homoserine: step 1/1. Functionally, transfers a succinyl group from succinyl-CoA to L-homoserine, forming succinyl-L-homoserine. The sequence is that of Homoserine O-succinyltransferase from Pseudoalteromonas atlantica (strain T6c / ATCC BAA-1087).